A 211-amino-acid chain; its full sequence is uncharacterized protein (211 aa).

Residues 155–211 form a disordered region; sequence AAENASEEGDKKQIITDSGKLPETEELTETTNEDLDIKQFSPYSSESSANVSSYNKS. The segment covering 178 to 188 has biased composition (acidic residues); it reads TEELTETTNED. Residues 195–211 show a composition bias toward low complexity; the sequence is SPYSSESSANVSSYNKS.

This is an uncharacterized protein from Schizosaccharomyces pombe (strain 972 / ATCC 24843) (Fission yeast).